The sequence spans 56 residues: MARKDKKTLPASGAGIVRYFNDDTAGVKLSPKQVVIGTIIVALICIALRFTTSVGY.

Residues 1 to 30 lie on the Cytoplasmic side of the membrane; sequence MARKDKKTLPASGAGIVRYFNDDTAGVKLS. The helical transmembrane segment at 31 to 52 threads the bilayer; it reads PKQVVIGTIIVALICIALRFTT. The Extracellular portion of the chain corresponds to 53–56; the sequence is SVGY.

Belongs to the SEC61-beta family. As to quaternary structure, component of the protein translocase complex. Heterotrimer consisting of alpha (SecY), beta (SecG) and gamma (SecE) subunits. Can form oligomers of the heterotrimer.

It localises to the cell membrane. Functionally, involved in protein export. The function of the beta subunit is unknown, but it may be involved in stabilization of the trimeric complex. This is Preprotein translocase subunit SecG from Methanosphaera stadtmanae (strain ATCC 43021 / DSM 3091 / JCM 11832 / MCB-3).